The primary structure comprises 244 residues: MKKLMVVLSLIAAAWAEEQNKLVHGGPCDKTSHPYQAALYTSGHLLCGGVLIHPLWVLTAAHCKKPNLQVFLGKHNLRQRESSQEQSSVVRAVIHPDYDAASHDQDIMLLRLARPAKLSELIQPLPLERDCSANTTSCHILGWGKTADGDFPDTIQCAYIHLVSREECEHAYPGQITQNMLCAGDEKYGKDSCQGDSGGPLVCGDHLRGLVSWGNIPCGSKEKPGVYTNVCRYTNWIQKTIQAK.

The first 16 residues, 1 to 16, serve as a signal peptide directing secretion; the sequence is MKKLMVVLSLIAAAWA. A propeptide spans 17–21 (activation peptide); it reads EEQNK. Positions 22 to 242 constitute a Peptidase S1 domain; it reads LVHGGPCDKT…YTNWIQKTIQ (221 aa). Disulfide bonds link cysteine 28-cysteine 157, cysteine 47-cysteine 63, cysteine 131-cysteine 231, cysteine 138-cysteine 203, cysteine 168-cysteine 182, and cysteine 193-cysteine 218. Catalysis depends on charge relay system residues histidine 62 and aspartate 106. Asparagine 134 carries N-linked (GlcNAc...) asparagine glycosylation. Serine 197 acts as the Charge relay system in catalysis.

Inactivated by autolytic cleavage after Arg-80. As to expression, in fluids, highest levels found in milk of lactating women followed by cerebrospinal fluid, nipple aspirate fluid and breast cyst fluid. Also found in serum, seminal plasma and some amniotic fluids and breast tumor cytosolic extracts. Not detected in urine. At the tissue level, highest concentrations found in glandular tissues such as salivary glands followed by lung, colon, fallopian tube, placenta, breast, pituitary and kidney. Not detected in skin, spleen, bone, thyroid, heart, ureter, liver, muscle, endometrium, testis, pancreas, seminal vesicle, ovary, adrenals and prostate. In brain, detected in gray matter neurons (at protein level). Colocalizes with pathological inclusions such as Lewy bodies and glial cytoplasmic inclusions. Overexpressed in primary breast tumors but not expressed in metastatic tumors.

It localises to the secreted. It is found in the nucleus. Its subcellular location is the nucleolus. The protein localises to the cytoplasm. The protein resides in the mitochondrion. It localises to the microsome. With respect to regulation, inhibited by a range of serine protease inhibitors including soybean trypsin inhibitor, benzamidine and serpins. Activated by a range of glycosaminoglycans including chondroitin sulfate, dermatan sulfate, heparan sulfate and heparin. Serine protease which exhibits a preference for Arg over Lys in the substrate P1 position and for Ser or Pro in the P2 position. Shows activity against amyloid precursor protein, myelin basic protein, gelatin, casein and extracellular matrix proteins such as fibronectin, laminin, vitronectin and collagen. Degrades alpha-synuclein and prevents its polymerization, indicating that it may be involved in the pathogenesis of Parkinson disease and other synucleinopathies. May be involved in regulation of axon outgrowth following spinal cord injury. Tumor cells treated with a neutralizing KLK6 antibody migrate less than control cells, suggesting a role in invasion and metastasis. This is Kallikrein-6 (KLK6) from Homo sapiens (Human).